Here is a 58-residue protein sequence, read N- to C-terminus: DNA-directed RNA polymerases I, II, and III subunit RPABC4 (58 aa).

Zn(2+)-binding residues include cysteine 19, cysteine 22, cysteine 36, and cysteine 39. Residues 19-39 (CGECHTENEIKSRDPIRCREC) form a C4-type zinc finger.

It belongs to the archaeal Rpo12/eukaryotic RPC10 RNA polymerase subunit family. Component of the RNA polymerase I (Pol I), RNA polymerase II (Pol II) and RNA polymerase III (Pol III) complexes consisting of at least 13, 12 and 17 subunits, respectively. Pol I complex consists of a ten-subunit catalytic core composed of POLR1A/RPA1, POLR1B/RPA2, POLR1C/RPAC1, POLR1D/RPAC2, POLR1H/RPA12, POLR2E/RPABC1, POLR2F/RPABC2, POLR2H/RPABC3, POLR2K/RPABC4 and POLR2L/RPABC5; a mobile stalk subunit POLR1F/RPA43 protruding from the core and additional subunits homologous to general transcription factors POLR1E/RPA49 and POLR1G/RPA34. Part of Pol I pre-initiation complex (PIC), in which Pol I core assembles with RRN3 and promoter-bound UTBF and SL1/TIF-IB complex. Pol II complex contains a ten-subunit catalytic core composed of POLR2A/RPB1, POLR2B/RPB2, POLR2C/RPB3, POLR2I/RPB9, POLR2J/RPB11, POLR2E/RPABC1, POLR2F/RPABC2, POLR2H/RPABC3, POLR2K/RPABC4 and POLR2L/RPABC5 and a mobile stalk composed of two subunits POLR2D/RPB4 and POLR2G/RPB7. Part of Pol II(G) complex, in which Pol II core associates with an additional subunit POLR2M; unlike conventional Pol II, Pol II(G) functions as a transcriptional repressor. Part of TBP-based Pol II pre-initiation complex (PIC), in which Pol II core assembles with general transcription factors and other specific initiation factors including GTF2E1, GTF2E2, GTF2F1, GTF2F2, TCEA1, ERCC2, ERCC3, GTF2H2, GTF2H3, GTF2H4, GTF2H5, GTF2A1, GTF2A2, GTF2B and TBP; this large multi-subunit PIC complex mediates DNA unwinding and targets Pol II core to the transcription start site where the first phosphodiester bond forms. Pol III complex consists of a ten-subunit catalytic core composed of POLR3A/RPC1, POLR3B/RPC2, POLR1C/RPAC1, POLR1D/RPAC2, POLR3K/RPC10, POLR2E/RPABC1, POLR2F/RPABC2, POLR2H/RPABC3, POLR2K/RPABC4 and POLR2L/RPABC5; a mobile stalk composed of two subunits POLR3H/RPC8 and CRCP/RPC9, protruding from the core and functioning primarily in transcription initiation; and additional subunits homologous to general transcription factors of the RNA polymerase II machinery, POLR3C/RPC3-POLR3F/RPC6-POLR3G/RPC7 heterotrimer required for transcription initiation and POLR3D/RPC4-POLR3E/RPC5 heterodimer involved in both transcription initiation and termination.

It is found in the nucleus. The protein resides in the nucleolus. In terms of biological role, DNA-dependent RNA polymerase catalyzes the transcription of DNA into RNA using the four ribonucleoside triphosphates as substrates. Common component of RNA polymerases I, II and III which synthesize ribosomal RNA precursors, mRNA precursors and many functional non-coding RNAs, and a small RNAs, such as 5S rRNA and tRNAs, respectively. The polypeptide is DNA-directed RNA polymerases I, II, and III subunit RPABC4 (POLR2K) (Bos taurus (Bovine)).